Reading from the N-terminus, the 341-residue chain is HTH-type transcriptional repressor PurR (341 aa).

An HTH lacI-type domain is found at 2 to 56; it reads ATIKDVAKRANVSTTTVSHVINKTRFVAEETRNAVWTAIKELHYSPSAVARSLKV. Residues 4–23 constitute a DNA-binding region (H-T-H motif); it reads IKDVAKRANVSTTTVSHVIN. Residues 48–56 mediate DNA binding; it reads SAVARSLKV. Hypoxanthine-binding residues include Tyr-73, Arg-190, Thr-192, Phe-221, and Asp-275.

Homodimer.

It participates in purine metabolism; purine nucleotide biosynthesis [regulation]. Functionally, is the main repressor of the genes involved in the de novo synthesis of purine nucleotides, regulating purB, purC, purEK, purF, purHD, purL, purMN and guaBA expression. PurR is allosterically activated to bind its cognate DNA by binding the purine corepressors, hypoxanthine or guanine, thereby effecting transcription repression. This Salmonella paratyphi A (strain ATCC 9150 / SARB42) protein is HTH-type transcriptional repressor PurR.